The following is a 477-amino-acid chain: UDP-N-acetylmuramate--L-alanine ligase (477 aa).

122-128 lines the ATP pocket; it reads GTHGKTT.

This sequence belongs to the MurCDEF family.

It localises to the cytoplasm. The enzyme catalyses UDP-N-acetyl-alpha-D-muramate + L-alanine + ATP = UDP-N-acetyl-alpha-D-muramoyl-L-alanine + ADP + phosphate + H(+). The protein operates within cell wall biogenesis; peptidoglycan biosynthesis. Functionally, cell wall formation. This is UDP-N-acetylmuramate--L-alanine ligase from Xanthomonas euvesicatoria pv. vesicatoria (strain 85-10) (Xanthomonas campestris pv. vesicatoria).